The chain runs to 285 residues: Nucleotide-binding protein Cphy_0331 (285 aa).

Position 8 to 15 (8 to 15) interacts with ATP; the sequence is GMSGAGKS. 59-62 lines the GTP pocket; it reads DIRS.

The protein belongs to the RapZ-like family.

Displays ATPase and GTPase activities. The polypeptide is Nucleotide-binding protein Cphy_0331 (Lachnoclostridium phytofermentans (strain ATCC 700394 / DSM 18823 / ISDg) (Clostridium phytofermentans)).